The following is a 181-amino-acid chain: ATP-dependent protease subunit HslV (181 aa).

Residue threonine 11 is part of the active site. Residues alanine 166, cysteine 169, and threonine 172 each contribute to the Na(+) site.

This sequence belongs to the peptidase T1B family. HslV subfamily. As to quaternary structure, a double ring-shaped homohexamer of HslV is capped on each side by a ring-shaped HslU homohexamer. The assembly of the HslU/HslV complex is dependent on binding of ATP.

It is found in the cytoplasm. The catalysed reaction is ATP-dependent cleavage of peptide bonds with broad specificity.. With respect to regulation, allosterically activated by HslU binding. Its function is as follows. Protease subunit of a proteasome-like degradation complex believed to be a general protein degrading machinery. The polypeptide is ATP-dependent protease subunit HslV (Chlorobaculum parvum (strain DSM 263 / NCIMB 8327) (Chlorobium vibrioforme subsp. thiosulfatophilum)).